The chain runs to 144 residues: D-aminoacyl-tRNA deacylase (144 aa).

The Gly-cisPro motif, important for rejection of L-amino acids motif lies at Gly136–Pro137.

It belongs to the DTD family. Homodimer.

It localises to the cytoplasm. It carries out the reaction glycyl-tRNA(Ala) + H2O = tRNA(Ala) + glycine + H(+). The catalysed reaction is a D-aminoacyl-tRNA + H2O = a tRNA + a D-alpha-amino acid + H(+). An aminoacyl-tRNA editing enzyme that deacylates mischarged D-aminoacyl-tRNAs. Also deacylates mischarged glycyl-tRNA(Ala), protecting cells against glycine mischarging by AlaRS. Acts via tRNA-based rather than protein-based catalysis; rejects L-amino acids rather than detecting D-amino acids in the active site. By recycling D-aminoacyl-tRNA to D-amino acids and free tRNA molecules, this enzyme counteracts the toxicity associated with the formation of D-aminoacyl-tRNA entities in vivo and helps enforce protein L-homochirality. The chain is D-aminoacyl-tRNA deacylase from Vibrio atlanticus (strain LGP32) (Vibrio splendidus (strain Mel32)).